We begin with the raw amino-acid sequence, 405 residues long: Solute carrier family 35 member E2A (405 aa).

The disordered stretch occupies residues 1–22 (MSAAAKSQVPEEAAPGCEEEPK). 10 helical membrane passes run 76 to 96 (LIYLTLWFFFSFCTLFLNKYI), 106 to 126 (MLGAVQMLSTTLIGCVKIFVP), 142 to 162 (FIMTMLFVGLMRFATVVLGLV), 167 to 187 (VAVSFAETVKSSAPIFTVIMS), 195 to 215 (TGLLVNLSLIPVMGGLALCTA), 219 to 241 (SFNILGFSAALSTNIMDCLQNVF), 264 to 284 (AAAVALLIPAWTFFMDIPVIG), 296 to 316 (IVLLLLTDGALFHLQSVTAYA), 326 to 346 (FSVASTVKHALSIWLSIIVFG), and 347 to 367 (NKITSLSAIGTILVTLGVLLY). The tract at residues 380–405 (SLVTATSRNPEDDTEPLVPQDSRQHH) is disordered.

The protein belongs to the TPT transporter family. SLC35E subfamily.

It is found in the membrane. Functionally, putative transporter. This is Solute carrier family 35 member E2A (Slc35e2a) from Mus musculus (Mouse).